Here is a 360-residue protein sequence, read N- to C-terminus: Nucleoporin SEH1-A (360 aa).

WD repeat units follow at residues aspartate 10–cysteine 49, threonine 55–lysine 96, aspartate 111–glutamine 152, serine 160–alanine 210, serine 217–serine 258, and asparagine 276–cysteine 315.

Belongs to the WD repeat SEC13 family. As to quaternary structure, component of the Nup107-160 subcomplex of the nuclear pore complex (NPC). The Nup107-160 subcomplex includes NUP160, NUP133, NUP107, NUP98, NUP85, NUP43, NUP37, SEH1 and SEC13. Component of the GATOR2 subcomplex, composed of MIOS, SEC13, SEH1L, WDR24 and WDR59. The GATOR2 complex interacts with CASTOR1 and CASTOR2; the interaction is negatively regulated by arginine. The GATOR2 complex interacts with SESN1, SESN2 and SESN3; the interaction is negatively regulated by amino acids.

It is found in the chromosome. It localises to the centromere. The protein localises to the kinetochore. Its subcellular location is the nucleus. The protein resides in the nuclear pore complex. It is found in the lysosome membrane. With respect to regulation, the GATOR2 complex is negatively regulated by the upstream amino acid sensors CASTOR1 and SESN2, which sequester the GATOR2 complex in absence of amino acids. In the presence of abundant amino acids, GATOR2 is released from CASTOR1 and SESN2 and activated. Its function is as follows. Component of the Nup107-160 subcomplex of the nuclear pore complex (NPC). The Nup107-160 subcomplex is required for the assembly of a functional NPC. The Nup107-160 subcomplex is also required for normal kinetochore microtubule attachment, mitotic progression and chromosome segregation. This subunit plays a role in recruitment of the Nup107-160 subcomplex to the kinetochore. As a component of the GATOR2 complex, functions as an activator of the amino acid-sensing branch of the mTORC1 signaling pathway. The GATOR2 complex indirectly activates mTORC1 through the inhibition of the GATOR1 subcomplex. GATOR2 probably acts as an E3 ubiquitin-protein ligase toward GATOR1. In the presence of abundant amino acids, the GATOR2 complex mediates ubiquitination of the NPRL2 core component of the GATOR1 complex, leading to GATOR1 inactivation. In the absence of amino acids, GATOR2 is inhibited, activating the GATOR1 complex. The protein is Nucleoporin SEH1-A (seh1l-a) of Xenopus laevis (African clawed frog).